The primary structure comprises 144 residues: 3-hydroxyacyl-[acyl-carrier-protein] dehydratase FabZ (144 aa).

Residue His-51 is part of the active site.

This sequence belongs to the thioester dehydratase family. FabZ subfamily.

It is found in the cytoplasm. The catalysed reaction is a (3R)-hydroxyacyl-[ACP] = a (2E)-enoyl-[ACP] + H2O. In terms of biological role, involved in unsaturated fatty acids biosynthesis. Catalyzes the dehydration of short chain beta-hydroxyacyl-ACPs and long chain saturated and unsaturated beta-hydroxyacyl-ACPs. The sequence is that of 3-hydroxyacyl-[acyl-carrier-protein] dehydratase FabZ from Clostridium botulinum (strain Langeland / NCTC 10281 / Type F).